We begin with the raw amino-acid sequence, 488 residues long: TOX high mobility group box family member 2 (488 aa).

A required for transcriptional activation region spans residues tyrosine 76–leucine 114. Disordered regions lie at residues arginine 192 to proline 258, tryptophan 293 to methionine 328, and serine 363 to isoleucine 473. Residues glycine 204–threonine 216 are compositionally biased toward low complexity. The span at glutamate 222–lysine 239 shows a compositional bias: basic and acidic residues. The Nuclear localization signal signature appears at valine 223–proline 252. Basic residues predominate over residues lysine 240 to lysine 250. A DNA-binding region (HMG box) is located at residues proline 255–proline 323. The segment covering glutamine 302–asparagine 316 has biased composition (polar residues). Positions proline 443–glycine 460 are enriched in low complexity.

It localises to the nucleus. Putative transcriptional activator involved in the hypothalamo-pituitary-gonadal system. This is TOX high mobility group box family member 2 (TOX2) from Homo sapiens (Human).